A 726-amino-acid polypeptide reads, in one-letter code: Pyrroloquinoline quinone-dependent pyranose dehydrogenase (726 aa).

Positions 1–18 (MRSSSLAWALGLVALANA) are cleaved as a signal peptide. Heme b-binding residues include methionine 83 and tyrosine 108. A disulfide bridge connects residues cysteine 138 and cysteine 141. An N-linked (GlcNAc...) asparagine glycan is attached at asparagine 140. Residues arginine 181 and histidine 182 each coordinate heme b. Positions 211–242 (PPLSGGAPTQPPTQQPPTTTAPPPPPPSSTFV) are disordered. Pro residues predominate over residues 219–238 (TQPPTQQPPTTTAPPPPPPS). Cysteine 244 and cysteine 302 are oxidised to a cystine. 4 residues coordinate pyrroloquinoline quinone: arginine 273, histidine 363, arginine 430, and asparagine 431. Ca(2+) is bound by residues serine 449 and aspartate 451. A disulfide bond links cysteine 492 and cysteine 525. Histidine 539 provides a ligand contact to pyrroloquinoline quinone. A glycan (N-linked (GlcNAc...) asparagine) is linked at asparagine 551. 3 residues coordinate pyrroloquinoline quinone: histidine 560, tryptophan 563, and asparagine 564. Cysteine 611 and cysteine 619 are joined by a disulfide. Arginine 621 contacts pyrroloquinoline quinone. Pro residues predominate over residues 659 to 678 (ITQPPITTSPPTPTTPPVVQ). Residues 659–689 (ITQPPITTSPPTPTTPPVVQPPTTVAPPQAS) are disordered. Low complexity predominate over residues 679-689 (PPTTVAPPQAS). The CBM1 domain maps to 688–724 (ASQTLWGQCGGQGWTGPTLCPANSVCRESNQWYSQCV).

This sequence belongs to the sugar dehydrogenase AA12 family. Requires Ca(2+) as cofactor. The cofactor is pyrroloquinoline quinone. It depends on heme b as a cofactor.

Its subcellular location is the secreted. Its function is as follows. Pyrroloquinoline quinone (PPQ)-dependent oxidoreductase that catalyzes the oxidation of various sugars including L-galactose, L-gulose, D-talose, D-arabinose, D-lyxose, L-fucose and D-glucosone. Shows significant activity toward the reverse-chair conformation of pyranoses. Shows little or no activity toward abundant sugars such as D-glucose, D-fructose, cellobiose, as well L-xylose and L-glucose. This enzyme is able to direct electrical communication with electrodes, without artificial electron mediators, thus allowing direct electron transfer (DET)-type bioelectrocatalysis. Exhibits binding affinity for insoluble cellulose. PDH does not oxidize cello-oligosaccharides but is able to activate the C-1-oxidizing Neurospora crassa LPMO9F and the C-4-oxidizing Neurospora crassa LPMO9C thanks to the electron-tranfer activity of the cytochrome domain and the localization of PDH in the vicinity of the LPMO substrates by the CBM1 domain. The sequence is that of Pyrroloquinoline quinone-dependent pyranose dehydrogenase from Coprinopsis cinerea (strain Okayama-7 / 130 / ATCC MYA-4618 / FGSC 9003) (Inky cap fungus).